Here is a 279-residue protein sequence, read N- to C-terminus: Undecaprenyl-diphosphatase (279 aa).

The next 6 membrane-spanning stretches (helical) occupy residues 45–65 (FVEM…IVIY), 85–105 (WQLW…ALPF), 113–133 (FNFM…FIWV), 188–208 (SVAA…YSGL), 226–246 (LILL…IRFL), and 255–275 (FTIF…YWLV).

It belongs to the UppP family.

The protein resides in the cell membrane. It carries out the reaction di-trans,octa-cis-undecaprenyl diphosphate + H2O = di-trans,octa-cis-undecaprenyl phosphate + phosphate + H(+). Functionally, catalyzes the dephosphorylation of undecaprenyl diphosphate (UPP). Confers resistance to bacitracin. The protein is Undecaprenyl-diphosphatase of Streptococcus agalactiae serotype III (strain NEM316).